A 287-amino-acid chain; its full sequence is GDT1-like protein C17G8.08c (287 aa).

7 helical membrane passes run 7–27, 50–70, 89–109, 112–132, 194–214, 232–252, and 267–287; these read WAII…GEGM, LIFS…FIVA, ALFI…LLFP, LTDI…LMEA, VMAT…FVSE, VYGV…LAVI, and MFIG…QGFF.

It belongs to the GDT1 family.

The protein resides in the membrane. The chain is GDT1-like protein C17G8.08c from Schizosaccharomyces pombe (strain 972 / ATCC 24843) (Fission yeast).